We begin with the raw amino-acid sequence, 40 residues long: Photosystem II reaction center protein J (40 aa).

Residues 8–28 (IPLWLIGTVTGIPVIGLVGIF) traverse the membrane as a helical segment.

The protein belongs to the PsbJ family. In terms of assembly, PSII is composed of 1 copy each of membrane proteins PsbA, PsbB, PsbC, PsbD, PsbE, PsbF, PsbH, PsbI, PsbJ, PsbK, PsbL, PsbM, PsbT, PsbX, PsbY, PsbZ, Psb30/Ycf12, at least 3 peripheral proteins of the oxygen-evolving complex and a large number of cofactors. It forms dimeric complexes.

It localises to the plastid. It is found in the chloroplast thylakoid membrane. Its function is as follows. One of the components of the core complex of photosystem II (PSII). PSII is a light-driven water:plastoquinone oxidoreductase that uses light energy to abstract electrons from H(2)O, generating O(2) and a proton gradient subsequently used for ATP formation. It consists of a core antenna complex that captures photons, and an electron transfer chain that converts photonic excitation into a charge separation. This is Photosystem II reaction center protein J from Cucumis sativus (Cucumber).